The chain runs to 461 residues: Protein-serine O-palmitoleoyltransferase porcupine (461 aa).

Residues 1–17 (MATFSRQEFFQQLLQGC) are Cytoplasmic-facing. A helical membrane pass occupies residues 18-38 (LLPTAQQGLDQIWLLLAICLA). Residues 39 to 66 (CRLLWRLGLPSYLKHASTVAGGFFSLYH) are Extracellular-facing. The chain crosses the membrane as a helical span at residues 67-87 (FFQLHMVWVVLLSLLCYLVLF). Residues 88-95 (LCRHSSHR) lie on the Cytoplasmic side of the membrane. Residues 96-116 (GVFLSVTILIYLLMGEMHMVD) form a helical membrane-spanning segment. Topologically, residues 117–152 (TVTWHKMRGAQMIVAMKAVSLGFDLDRGEVGTVPSP) are extracellular. The helical transmembrane segment at 153 to 173 (VEFMGYLYFVGTIVFGPWISF) threads the bilayer. Topologically, residues 174 to 198 (HSYLQAVQGRPLSCRWLQKVARSLA) are cytoplasmic. The S-palmitoyl cysteine moiety is linked to residue cysteine 187. The chain crosses the membrane as a helical span at residues 199–219 (LALLCLVLSTCVGPYLFPYFI). Residues 220-252 (PLNGDRLLRNKKRKARGTMVRWLRAYESAVSFH) are Extracellular-facing. The helical transmembrane segment at 253–273 (FSNYFVGFLSEATATLAGAGF) threads the bilayer. Residues 274-337 (TEEKDHLEWD…SAVLVTYAAS (64 aa)) are Cytoplasmic-facing. A helical membrane pass occupies residues 338 to 358 (ALLHGFSFHLAAVLLSLAFIT). Histidine 341 is a catalytic residue. Over 359–396 (YVEHVLRKRLARILSACVLSKRCPPDCSHQHRLGLGVR) the chain is Extracellular. Residues 397-417 (ALNLLFGALAIFHLAYLGSLF) traverse the membrane as a helical segment. The Cytoplasmic portion of the chain corresponds to 418-461 (DVDVDDTTEEQGYGMAYTVHKWSELSWASHWVTFGCWIFYRLIG).

This sequence belongs to the membrane-bound acyltransferase family. Porcupine subfamily. In terms of assembly, interacts with WNT1, WNT3, WNT3A, WNT4, WNT5A, WNT5B, WNT6, WNT7A and WNT7B. Isoform 1 is expressed in fetal brain, brain, amygdala, caudate nucleus, cerebellum, hippocampus, pituitary, thalamus, heart, skeletal muscle and testis. Isoform 4 is expressed in amygdala, corpus callosum, hippocampus, spinal cord, kidney, liver, lung, spleen, uterus, testis. Isoform 2 and isoform 3 are expressed in substantia negra, spinal cord, heart and lung.

It localises to the endoplasmic reticulum membrane. It catalyses the reaction [Wnt protein]-L-serine + (9Z)-hexadecenoyl-CoA = [Wnt protein]-O-(9Z)-hexadecenoyl-L-serine + CoA. Protein-serine O-palmitoleoyltransferase that acts as a key regulator of the Wnt signaling pathway by mediating the attachment of palmitoleate, a 16-carbon monounsaturated fatty acid (C16:1(9Z)), to Wnt proteins. Serine palmitoleoylation of WNT proteins is required for efficient binding to frizzled receptors. The chain is Protein-serine O-palmitoleoyltransferase porcupine from Homo sapiens (Human).